We begin with the raw amino-acid sequence, 256 residues long: MRHSPRKRFGQNFLQDKYIINEILRAINPLADDNMLEIGPGLGALTQPLLQKLNQLTAIEIDTDLQSYLTCLPASQGKLNLIPADALTVDFCQFGPHLRVVGNLPYNISTPLLIYLLKFITCIDDMHFMLQKEVVERIAAAHGTKAYGRLSVMLQYHCEVEYLFDVPPEAFEPRPKVDSAIVRLTPYRVSPFESVNTEKLENIVAKAFAMRRKTLTNNLKGIISLSQLNDLGIDGGKRPEQISVAEYVQLAKFISN.

S-adenosyl-L-methionine contacts are provided by Asn12, Leu14, Gly39, Glu60, Asp85, and Asn103.

The protein belongs to the class I-like SAM-binding methyltransferase superfamily. rRNA adenine N(6)-methyltransferase family. RsmA subfamily.

The protein resides in the cytoplasm. The enzyme catalyses adenosine(1518)/adenosine(1519) in 16S rRNA + 4 S-adenosyl-L-methionine = N(6)-dimethyladenosine(1518)/N(6)-dimethyladenosine(1519) in 16S rRNA + 4 S-adenosyl-L-homocysteine + 4 H(+). Its function is as follows. Specifically dimethylates two adjacent adenosines (A1518 and A1519) in the loop of a conserved hairpin near the 3'-end of 16S rRNA in the 30S particle. May play a critical role in biogenesis of 30S subunits. The protein is Ribosomal RNA small subunit methyltransferase A of Legionella pneumophila subsp. pneumophila (strain Philadelphia 1 / ATCC 33152 / DSM 7513).